The primary structure comprises 524 residues: Beta-glucosidase 22 (524 aa).

The signal sequence occupies residues 1-24 (MALQKFPLLGLLFLITIVVSSTIA). Q55 provides a ligand contact to a beta-D-glucoside. Residue N61 is glycosylated (N-linked (GlcNAc...) asparagine). A beta-D-glucoside is bound by residues H158 and 203-204 (NE). E204 acts as the Proton donor in catalysis. An intrachain disulfide couples C223 to C230. A beta-D-glucoside-binding positions include Y346, E418, W468, 475–476 (EW), and F484. E418 serves as the catalytic Nucleophile. A glycan (N-linked (GlcNAc...) asparagine) is linked at N494. Positions 521 to 524 (KDEL) match the Prevents secretion from ER motif.

The protein belongs to the glycosyl hydrolase 1 family. In terms of assembly, component of the PYK10 complex, at least composed of PYK10/BGLU23, BGLU21, BGLU22, JAL22, JAL23, PBP1/JAL30, PBP2/JAL31, JAL32, JAL33, JAL34, JAL35, GLL22 and GLL23. In terms of tissue distribution, expressed exclusively in roots.

The protein localises to the endoplasmic reticulum lumen. It carries out the reaction Hydrolysis of terminal, non-reducing beta-D-glucosyl residues with release of beta-D-glucose.. Activated upon binding to PBP1 or PBP2. Beta-D-glucosidase active on scopolin &gt;&gt; esculin &gt;&gt; 4-MU-glucoside. No activity with DIMBOA-glucoside, pNP-glucoside, oNP-glucoside and sinigrin as substrates. This is Beta-glucosidase 22 from Arabidopsis thaliana (Mouse-ear cress).